Reading from the N-terminus, the 291-residue chain is 4-hydroxy-tetrahydrodipicolinate synthase (291 aa).

T45 contacts pyruvate. The active-site Proton donor/acceptor is Y133. The active-site Schiff-base intermediate with substrate is K161. I203 lines the pyruvate pocket.

The protein belongs to the DapA family. Homotetramer; dimer of dimers.

The protein resides in the cytoplasm. The catalysed reaction is L-aspartate 4-semialdehyde + pyruvate = (2S,4S)-4-hydroxy-2,3,4,5-tetrahydrodipicolinate + H2O + H(+). It functions in the pathway amino-acid biosynthesis; L-lysine biosynthesis via DAP pathway; (S)-tetrahydrodipicolinate from L-aspartate: step 3/4. Functionally, catalyzes the condensation of (S)-aspartate-beta-semialdehyde [(S)-ASA] and pyruvate to 4-hydroxy-tetrahydrodipicolinate (HTPA). This chain is 4-hydroxy-tetrahydrodipicolinate synthase, found in Neisseria meningitidis serogroup C (strain 053442).